The primary structure comprises 165 residues: Phosphopantetheine adenylyltransferase (165 aa).

Residue Ser9 participates in substrate binding. Residues 9-10 and His17 contribute to the ATP site; that span reads SF. Positions 41, 73, and 87 each coordinate substrate. ATP-binding positions include 88 to 90, Glu98, and 122 to 128; these read GLR and YSFLSSS.

Belongs to the bacterial CoaD family. Homohexamer. The cofactor is Mg(2+).

It localises to the cytoplasm. It catalyses the reaction (R)-4'-phosphopantetheine + ATP + H(+) = 3'-dephospho-CoA + diphosphate. It participates in cofactor biosynthesis; coenzyme A biosynthesis; CoA from (R)-pantothenate: step 4/5. In terms of biological role, reversibly transfers an adenylyl group from ATP to 4'-phosphopantetheine, yielding dephospho-CoA (dPCoA) and pyrophosphate. This is Phosphopantetheine adenylyltransferase from Acidothermus cellulolyticus (strain ATCC 43068 / DSM 8971 / 11B).